A 209-amino-acid polypeptide reads, in one-letter code: Uridine kinase (209 aa).

Residue glycine 12–threonine 19 participates in ATP binding.

Belongs to the uridine kinase family.

The protein localises to the cytoplasm. The catalysed reaction is uridine + ATP = UMP + ADP + H(+). It carries out the reaction cytidine + ATP = CMP + ADP + H(+). It functions in the pathway pyrimidine metabolism; CTP biosynthesis via salvage pathway; CTP from cytidine: step 1/3. It participates in pyrimidine metabolism; UMP biosynthesis via salvage pathway; UMP from uridine: step 1/1. The sequence is that of Uridine kinase from Streptococcus agalactiae serotype III (strain NEM316).